The sequence spans 256 residues: 5-keto-4-deoxy-D-glucarate aldolase (256 aa).

His50 (proton acceptor) is an active-site residue. A substrate-binding site is contributed by Gln151. Glu153 contacts Mg(2+). 2 residues coordinate substrate: Ser178 and Asp179. Asp179 is a Mg(2+) binding site.

It belongs to the HpcH/HpaI aldolase family. KDGluc aldolase subfamily. As to quaternary structure, homohexamer; trimer of dimers. The cofactor is Mg(2+).

It carries out the reaction 5-dehydro-4-deoxy-D-glucarate = 2-hydroxy-3-oxopropanoate + pyruvate. The enzyme catalyses 2-dehydro-3-deoxy-D-glucarate = 2-hydroxy-3-oxopropanoate + pyruvate. The protein operates within carbohydrate acid metabolism; galactarate degradation; D-glycerate from galactarate: step 2/3. In terms of biological role, catalyzes the reversible retro-aldol cleavage of both 5-keto-4-deoxy-D-glucarate and 2-keto-3-deoxy-D-glucarate to pyruvate and tartronic semialdehyde. The protein is 5-keto-4-deoxy-D-glucarate aldolase of Salmonella arizonae (strain ATCC BAA-731 / CDC346-86 / RSK2980).